The chain runs to 181 residues: dTTP/UTP pyrophosphatase (181 aa).

Residue aspartate 67 is the Proton acceptor of the active site.

Belongs to the Maf family. YhdE subfamily. A divalent metal cation serves as cofactor.

The protein resides in the cytoplasm. It carries out the reaction dTTP + H2O = dTMP + diphosphate + H(+). It catalyses the reaction UTP + H2O = UMP + diphosphate + H(+). Nucleoside triphosphate pyrophosphatase that hydrolyzes dTTP and UTP. May have a dual role in cell division arrest and in preventing the incorporation of modified nucleotides into cellular nucleic acids. The protein is dTTP/UTP pyrophosphatase of Latilactobacillus sakei subsp. sakei (strain 23K) (Lactobacillus sakei subsp. sakei).